A 335-amino-acid chain; its full sequence is Delta(7)-sterol 5(6)-desaturase erg3B (335 aa).

3 consecutive transmembrane segments (helical) span residues 74–94 (IWAF…ALVF), 113–133 (IGQA…LFLA), and 152–172 (LYTY…IYWI). Residues 160-284 (LFIAFTDFAI…FITFWDRIGG (125 aa)) enclose the Fatty acid hydroxylase domain. The Histidine box-1 signature appears at 173–177 (HRGLH). Residues 186–190 (HKPHH) carry the Histidine box-2 motif. A helical transmembrane segment spans residues 219–239 (PFLFPLQKAAYLGLFVFVTIW). N256 carries N-linked (GlcNAc...) asparagine glycosylation. The Histidine box-3 motif lies at 261–265 (HTIHH).

The protein belongs to the sterol desaturase family. The cofactor is Fe cation.

It is found in the endoplasmic reticulum membrane. The protein operates within steroid metabolism; ergosterol biosynthesis. Functionally, delta(7)-sterol 5(6)-desaturase; part of the third module of ergosterol biosynthesis pathway that includes the late steps of the pathway. Erg3B catalyzes the introduction of a C-5 double bond in the B ring to produce 5-dehydroepisterol. The third module or late pathway involves the ergosterol synthesis itself through consecutive reactions that mainly occur in the endoplasmic reticulum (ER) membrane. Firstly, the squalene synthase erg9 catalyzes the condensation of 2 farnesyl pyrophosphate moieties to form squalene, which is the precursor of all steroids. Squalene synthase is crucial for balancing the incorporation of farnesyl diphosphate (FPP) into sterol and nonsterol isoprene synthesis. Secondly, squalene is converted into lanosterol by the consecutive action of the squalene epoxidase erg1 and the lanosterol synthase erg7. Then, the delta(24)-sterol C-methyltransferase erg6 methylates lanosterol at C-24 to produce eburicol. Eburicol is the substrate of the sterol 14-alpha demethylase encoded by cyp51A and cyp51B, to yield 4,4,24-trimethyl ergosta-8,14,24(28)-trienol. The C-14 reductase erg24 then reduces the C14=C15 double bond which leads to 4,4-dimethylfecosterol. A sequence of further demethylations at C-4, involving the C-4 demethylation complex containing the C-4 methylsterol oxidases erg25A or erg25B, the sterol-4-alpha-carboxylate 3-dehydrogenase erg26 and the 3-keto-steroid reductase erg27, leads to the production of fecosterol via 4-methylfecosterol. The C-8 sterol isomerase erg2 then catalyzes the reaction which results in unsaturation at C-7 in the B ring of sterols and thus converts fecosterol to episterol. The sterol-C5-desaturase erg3B then catalyzes the introduction of a C-5 double bond in the B ring to produce 5-dehydroepisterol. The 2 other sterol-C5-desaturases, erg3A and erg3C, seem to be less important in ergosterol biosynthesis. The C-22 sterol desaturase erg5 further converts 5-dehydroepisterol into ergosta-5,7,22,24(28)-tetraen-3beta-ol by forming the C-22(23) double bond in the sterol side chain. Finally, ergosta-5,7,22,24(28)-tetraen-3beta-ol is substrate of the C-24(28) sterol reductases erg4A and erg4B to produce ergosterol. Possible alternative sterol biosynthetic pathways might exist from fecosterol to ergosterol, depending on the activities of the erg3 isoforms. The protein is Delta(7)-sterol 5(6)-desaturase erg3B of Aspergillus fumigatus (strain ATCC MYA-4609 / CBS 101355 / FGSC A1100 / Af293) (Neosartorya fumigata).